The following is a 1202-amino-acid chain: Caffeine-induced protein 16 (1202 aa).

A PAP-associated domain is found at 1105–1159; the sequence is NIALLLRGFFCYYGLTTQYSFDWEAYMIDISSSQLKRKSTEFKDCPFVVLDPFLK.

In Schizosaccharomyces pombe (strain 972 / ATCC 24843) (Fission yeast), this protein is Caffeine-induced protein 16 (cid16).